The following is a 35-amino-acid chain: Unknown protein 14 from 2D-PAGE (35 aa).

The interval 1-35 (VVXXQTLXDXRGIYGDQGSIGPXXIXGLQGDRDAD) is disordered.

The sequence is that of Unknown protein 14 from 2D-PAGE from Bombyx mori (Silk moth).